Consider the following 234-residue polypeptide: Transcription factor bHLH160 (234 aa).

Positions 1–13 (MSSQPNHQTSISS) are enriched in polar residues. The tract at residues 1 to 67 (MSSQPNHQTS…GAAKKQDHNA (67 aa)) is disordered. Residues 27–37 (IVEKESAEKDT) are compositionally biased toward basic and acidic residues. The 56-residue stretch at 60 to 115 (AKKQDHNAKERLRRMRLHASYLTLGTLLPDHSSSSSKKKWSAPSIIDNVITYIPKL) folds into the bHLH domain.

It belongs to the bHLH protein family.

It localises to the nucleus. This Arabidopsis thaliana (Mouse-ear cress) protein is Transcription factor bHLH160.